We begin with the raw amino-acid sequence, 398 residues long: tRNA (guanine-N(7)-)-methyltransferase (398 aa).

Glu124, Glu149, and Asp176 together coordinate S-adenosyl-L-methionine. Position 232 (Asp232) interacts with substrate.

Belongs to the class I-like SAM-binding methyltransferase superfamily. TrmB family.

The catalysed reaction is guanosine(46) in tRNA + S-adenosyl-L-methionine = N(7)-methylguanosine(46) in tRNA + S-adenosyl-L-homocysteine. It functions in the pathway tRNA modification; N(7)-methylguanine-tRNA biosynthesis. Its function is as follows. Catalyzes the formation of N(7)-methylguanine at position 46 (m7G46) in tRNA. In Helicobacter acinonychis (strain Sheeba), this protein is tRNA (guanine-N(7)-)-methyltransferase.